Here is a 374-residue protein sequence, read N- to C-terminus: o-succinylbenzoate synthase (374 aa).

Lys164 serves as the catalytic Proton donor. The Mg(2+) site is built by Asp189, Glu214, and Asp239. The active-site Proton acceptor is the Lys263.

Belongs to the mandelate racemase/muconate lactonizing enzyme family. MenC type 2 subfamily. In terms of assembly, homodimer. It depends on a divalent metal cation as a cofactor.

The enzyme catalyses (1R,6R)-6-hydroxy-2-succinyl-cyclohexa-2,4-diene-1-carboxylate = 2-succinylbenzoate + H2O. Its pathway is quinol/quinone metabolism; 1,4-dihydroxy-2-naphthoate biosynthesis; 1,4-dihydroxy-2-naphthoate from chorismate: step 4/7. The protein operates within quinol/quinone metabolism; menaquinone biosynthesis. Converts 2-succinyl-6-hydroxy-2,4-cyclohexadiene-1-carboxylate (SHCHC) to 2-succinylbenzoate (OSB). Also acts as a N-succinylamino acid racemase (NSAR) that catalyzes the racemization of N-succinyl-L-phenylglycine. L.innocua has the menaquinone synthesis pathway, indicating that the species requires OSBS activity. However, the NSAR/OSBS is not encoded in the menaquinone operon, raising the possibility that both NSAR and OSBS are biological functions. The sequence is that of o-succinylbenzoate synthase from Listeria innocua serovar 6a (strain ATCC BAA-680 / CLIP 11262).